A 354-amino-acid polypeptide reads, in one-letter code: Eukaryotic translation initiation factor 3 subunit H (354 aa).

The disordered stretch occupies residues 1–28 (MATRQPYQKKFQSRDQREQTSSQQAPNS). The segment covering 19 to 28 (QTSSQQAPNS) has biased composition (polar residues). In terms of domain architecture, MPN spans 33–174 (VTVDALVVMK…LSAFRLSNKA (142 aa)).

Belongs to the eIF-3 subunit H family. As to quaternary structure, component of the eukaryotic translation initiation factor 3 (eIF-3) complex.

It localises to the cytoplasm. Its function is as follows. Component of the eukaryotic translation initiation factor 3 (eIF-3) complex, which is involved in protein synthesis of a specialized repertoire of mRNAs and, together with other initiation factors, stimulates binding of mRNA and methionyl-tRNAi to the 40S ribosome. The eIF-3 complex specifically targets and initiates translation of a subset of mRNAs involved in cell proliferation. In Monosiga brevicollis (Choanoflagellate), this protein is Eukaryotic translation initiation factor 3 subunit H.